The chain runs to 237 residues: UPF0174 protein YaaW (237 aa).

The protein belongs to the UPF0174 family.

The chain is UPF0174 protein YaaW from Escherichia coli O157:H7.